An 858-amino-acid polypeptide reads, in one-letter code: Chitin synthase 2 (858 aa).

Basic and acidic residues predominate over residues 1-12 (MYPEGPKPEHDQ). The interval 1 to 116 (MYPEGPKPEH…GQAPRRQPRR (116 aa)) is disordered. Positions 15–24 (LQDTQFSNQP) are enriched in polar residues. Composition is skewed to pro residues over residues 52 to 68 (AYPP…PNFP) and 76 to 89 (PYPP…PVSP). 7 helical membrane-spanning segments follow: residues 500–517 (RWLN…YHWR), 540–560 (TYNL…FFIL), 586–606 (LHTV…IMAL), 621–641 (MVFF…ITVV), 665–685 (NIII…FMFL), 799–819 (VLAW…TTVI), and 825–845 (ASIY…IRFT).

Belongs to the chitin synthase family.

The protein localises to the cell membrane. It carries out the reaction [(1-&gt;4)-N-acetyl-beta-D-glucosaminyl](n) + UDP-N-acetyl-alpha-D-glucosamine = [(1-&gt;4)-N-acetyl-beta-D-glucosaminyl](n+1) + UDP + H(+). Polymerizes chitin, a structural polymer of the cell wall and septum, by transferring the sugar moiety of UDP-GlcNAc to the non-reducing end of the growing chitin polymer. This Rhizopus oligosporus (Rhizopus microsporus var. oligosporus) protein is Chitin synthase 2 (CHS2).